Consider the following 261-residue polypeptide: MWFLILFLALSLGGIDAAPPVQSRIVGGFKCEKNSQPWQVAVYYHKEHICGGVLLDRNWVLTAAHCYVDECEVWLGKNQLFQEEPSAQNRLVSKSFPHPGFNMTLLTFEKLPPGADFSNDLMLLRLSKPADITDVVKPIDLPTKEPKLDSTCLVSGWGSITPTKWQKPDDLQCMFTKLLPNENCAKAYLLKVTDVMLCTIEMGEDKGPCVGDSGGPLICDGVLQGTVSIGPDPCGIPGVSAIYTNLVKFNSWIKDTMMKNA.

The first 18 residues, 1 to 18 (MWFLILFLALSLGGIDAA), serve as a signal peptide directing secretion. Residues 19–24 (PPVQSR) constitute a propeptide, activation peptide. Residues 25–258 (IVGGFKCEKN…FNSWIKDTMM (234 aa)) enclose the Peptidase S1 domain. 5 disulfides stabilise this stretch: Cys31–Cys173, Cys50–Cys66, Cys152–Cys219, Cys184–Cys198, and Cys209–Cys234. Catalysis depends on His65, which acts as the Charge relay system. Asn102 is a glycosylation site (N-linked (GlcNAc...) asparagine). Asp120 acts as the Charge relay system in catalysis. The active-site Charge relay system is Ser213.

Belongs to the peptidase S1 family. Kallikrein subfamily.

The catalysed reaction is Cleavage of the Leu-|-Leu bond in synthetic tetradecapeptide renin substrate, to produce angiotensin I, but not active on natural angiotensinogen. Also hydrolyzes Bz-Arg-p-nitroanilide.. This is Kallikrein 1-related peptidase b16 (Klk1b16) from Mus musculus (Mouse).